Here is a 402-residue protein sequence, read N- to C-terminus: Protein FixF (402 aa).

In Sinorhizobium fredii (strain NBRC 101917 / NGR234), this protein is Protein FixF (fixF).